A 209-amino-acid chain; its full sequence is Protein lin-28 homolog A (209 aa).

The segment at 1-31 is disordered; it reads MGSVSNQQFAGGCAKAAEEAPEEAPEDAARA. Gly2 bears the N-acetylglycine mark. Residue Ser3 is modified to Phosphoserine. The CSD domain maps to 39–112; that stretch reads HGAGICKWFN…GLESIRVTGP (74 aa). The flexible linker stretch occupies residues 113–136; it reads GGVFCIGSERRPKGKSMQKRRSKG. Phosphoserine is present on Ser120. 2 CCHC-type zinc fingers span residues 137-154 and 159-176; these read DRCY…ECKL and KKCH…SCPL. The disordered stretch occupies residues 178-209; the sequence is AQQGPSAQGKPTYFREEEEEIHSPTLLPEAQN. At Ser200 the chain carries Phosphoserine.

This sequence belongs to the lin-28 family. As to quaternary structure, monomer. During skeletal muscle differentiation, associated with translation initiation complexes in the polysomal compartment. Directly interacts with EIF3S2. Interacts with NCL in an RNA-dependent manner. Interacts (via C-terminus) with DHX9 (via N- and C-terminus); this interaction occurs in a RNA-independent manner. Interacts with TUT4 in the presence of pre-let-7 RNA. As to expression, expressed in embryonic stem cells, placenta and testis. Tends to be up-regulated in HER2-overexpressing breast tumors.

The protein resides in the cytoplasm. The protein localises to the rough endoplasmic reticulum. Its subcellular location is the P-body. It is found in the stress granule. It localises to the nucleus. The protein resides in the nucleolus. RNA-binding protein that inhibits processing of pre-let-7 miRNAs and regulates translation of mRNAs that control developmental timing, pluripotency and metabolism. Seems to recognize a common structural G-quartet (G4) feature in its miRNA and mRNA targets. 'Translational enhancer' that drives specific mRNAs to polysomes and increases the efficiency of protein synthesis. Its association with the translational machinery and target mRNAs results in an increased number of initiation events per molecule of mRNA and, indirectly, in mRNA stabilization. Binds IGF2 mRNA, MYOD1 mRNA, ARBP/36B4 ribosomal protein mRNA and its own mRNA. Essential for skeletal muscle differentiation program through the translational up-regulation of IGF2 expression. Suppressor of microRNA (miRNA) biogenesis, including that of let-7, miR107, miR-143 and miR-200c. Specifically binds the miRNA precursors (pre-miRNAs), recognizing an 5'-GGAG-3' motif found in pre-miRNA terminal loop, and recruits TUT4 and TUT7 uridylyltransferases. This results in the terminal uridylation of target pre-miRNAs. Uridylated pre-miRNAs fail to be processed by Dicer and undergo degradation. The repression of let-7 expression is required for normal development and contributes to maintain the pluripotent state by preventing let-7-mediated differentiation of embryonic stem cells. Localized to the periendoplasmic reticulum area, binds to a large number of spliced mRNAs and inhibits the translation of mRNAs destined for the ER, reducing the synthesis of transmembrane proteins, ER or Golgi lumen proteins, and secretory proteins. Binds to and enhances the translation of mRNAs for several metabolic enzymes, such as PFKP, PDHA1 or SDHA, increasing glycolysis and oxidative phosphorylation. Which, with the let-7 repression may enhance tissue repair in adult tissue. The chain is Protein lin-28 homolog A (LIN28A) from Homo sapiens (Human).